The primary structure comprises 482 residues: NAD(+) hydrolase ThsA (482 aa).

Residues 3–281 (EHEQKIMIDR…EEITKRFRCK (279 aa)) enclose the Deacetylase sirtuin-type domain. Positions 112 and 150 each coordinate NAD(+). Catalysis depends on His-150, which acts as the Proton acceptor. Residues 282 to 482 (NVFLSGSAHE…SKIHDVIKLI (201 aa)) form an SLOG (STALD) domain region. 3'cADPR is bound by residues Gly-287, Ser-288, Leu-324, Phe-355, Arg-373, Lys-390, Gly-407, and Glu-411.

Belongs to the soluble Thoeris ThsA family. In terms of assembly, homotetramer in solution.

The catalysed reaction is NAD(+) + H2O = ADP-D-ribose + nicotinamide + H(+). Its activity is regulated as follows. In vivo probably activated by a cyclic ADP-D-ribose generated by ThsB (might be 3'cADPR). In terms of biological role, NAD(+) hydrolyzing component (NADase) of the Thoeris antiviral defense system, composed of ThsA and ThsB (maybe J591_1492). As purified, has NADase activity that is not activated by any tested cADPR isomers; binds 3'cADPR better than 2'cADPR. It was suggested the purified protein is already in a fully active state. Upon activation binds and hydrolyzes NAD(+), leading to cell death and inhibition of phage replication. This is NAD(+) hydrolase ThsA from Acinetobacter baumannii (strain 532279).